The chain runs to 382 residues: Putative glutamate--cysteine ligase 2-1 (382 aa).

Belongs to the glutamate--cysteine ligase type 2 family. YbdK subfamily.

The enzyme catalyses L-cysteine + L-glutamate + ATP = gamma-L-glutamyl-L-cysteine + ADP + phosphate + H(+). In terms of biological role, ATP-dependent carboxylate-amine ligase which exhibits weak glutamate--cysteine ligase activity. The sequence is that of Putative glutamate--cysteine ligase 2-1 from Nocardioides sp. (strain ATCC BAA-499 / JS614).